Consider the following 360-residue polypeptide: Phospho-N-acetylmuramoyl-pentapeptide-transferase (360 aa).

Helical transmembrane passes span 26–46, 73–93, 98–118, 132–152, 168–188, 199–219, 236–256, 263–283, 288–308, and 338–358; these read SIMA…KVIN, TMGG…WADL, VWFT…DDYW, WKYF…YAMG, VMPQ…VGTS, GLAI…AWAT, SGEL…FLWY, VFMG…IAVL, LLLL…ILQV, and VIVR…VTLK.

Belongs to the glycosyltransferase 4 family. MraY subfamily. Mg(2+) serves as cofactor.

It is found in the cell inner membrane. It catalyses the reaction UDP-N-acetyl-alpha-D-muramoyl-L-alanyl-gamma-D-glutamyl-meso-2,6-diaminopimeloyl-D-alanyl-D-alanine + di-trans,octa-cis-undecaprenyl phosphate = di-trans,octa-cis-undecaprenyl diphospho-N-acetyl-alpha-D-muramoyl-L-alanyl-D-glutamyl-meso-2,6-diaminopimeloyl-D-alanyl-D-alanine + UMP. It participates in cell wall biogenesis; peptidoglycan biosynthesis. Catalyzes the initial step of the lipid cycle reactions in the biosynthesis of the cell wall peptidoglycan: transfers peptidoglycan precursor phospho-MurNAc-pentapeptide from UDP-MurNAc-pentapeptide onto the lipid carrier undecaprenyl phosphate, yielding undecaprenyl-pyrophosphoryl-MurNAc-pentapeptide, known as lipid I. The polypeptide is Phospho-N-acetylmuramoyl-pentapeptide-transferase (Haemophilus ducreyi (strain 35000HP / ATCC 700724)).